Consider the following 365-residue polypeptide: Tubulin-like protein CetZ (365 aa).

Residues 10–14 (QCGTK), 103–105 (GTG), Glu136, Asn163, and Asn181 contribute to the GTP site.

The protein belongs to the CetZ family.

It localises to the cytoplasm. Functionally, involved in cell shape control. In Pyrococcus horikoshii (strain ATCC 700860 / DSM 12428 / JCM 9974 / NBRC 100139 / OT-3), this protein is Tubulin-like protein CetZ.